The sequence spans 353 residues: Very-long-chain 3-oxoacyl-CoA reductase (353 aa).

A helical membrane pass occupies residues 33–53; the sequence is AAWALIAAGGFFVISRALLFG. Residues V78, D133, D141, N160, Y227, K231, I260, and S262 each contribute to the NADP(+) site. Residue Y227 is the Proton donor of the active site. The Lowers pKa of active site Tyr role is filled by K231.

The protein belongs to the short-chain dehydrogenases/reductases (SDR) family.

It localises to the endoplasmic reticulum membrane. It carries out the reaction a very-long-chain (3R)-3-hydroxyacyl-CoA + NADP(+) = a very-long-chain 3-oxoacyl-CoA + NADPH + H(+). It participates in lipid metabolism; fatty acid biosynthesis. Its function is as follows. Component of the microsomal membrane bound fatty acid elongation system, which produces the 26-carbon very long-chain fatty acids (VLCFA) from palmitate. Catalyzes the reduction of the 3-ketoacyl-CoA intermediate that is formed in each cycle of fatty acid elongation. VLCFAs serve as precursors for ceramide and sphingolipids. The protein is Very-long-chain 3-oxoacyl-CoA reductase of Aspergillus terreus (strain NIH 2624 / FGSC A1156).